We begin with the raw amino-acid sequence, 520 residues long: Cholesterol side-chain cleavage enzyme, mitochondrial (520 aa).

A mitochondrion-targeting transit peptide spans 1–39 (MLARGLPLRSALVKACPPLLNTGREGWGHHRVGTGEGAG). Residues 27–48 (WGHHRVGTGEGAGISTRTPRPY) are disordered. Position 461 (Cys-461) interacts with heme.

The protein belongs to the cytochrome P450 family. In terms of assembly, interacts with FDX1/adrenodoxin. Requires heme as cofactor.

It is found in the mitochondrion inner membrane. It carries out the reaction 6 reduced [adrenodoxin] + cholesterol + 3 O2 + 6 H(+) = 4-methylpentanal + pregnenolone + 6 oxidized [adrenodoxin] + 4 H2O. It catalyses the reaction 2 reduced [adrenodoxin] + cholesterol + O2 + 2 H(+) = (22R)-hydroxycholesterol + 2 oxidized [adrenodoxin] + H2O. The catalysed reaction is (22R)-hydroxycholesterol + 2 reduced [adrenodoxin] + O2 + 2 H(+) = (20R,22R)-20,22-dihydroxycholesterol + 2 oxidized [adrenodoxin] + H2O. The enzyme catalyses (20R,22R)-20,22-dihydroxycholesterol + 2 reduced [adrenodoxin] + O2 + 2 H(+) = 4-methylpentanal + pregnenolone + 2 oxidized [adrenodoxin] + 2 H2O. The protein operates within lipid metabolism; C21-steroid hormone metabolism. It participates in steroid metabolism; cholesterol metabolism. In terms of biological role, a cytochrome P450 monooxygenase that catalyzes the side-chain hydroxylation and cleavage of cholesterol to pregnenolone, the precursor of most steroid hormones. Catalyzes three sequential oxidation reactions of cholesterol, namely the hydroxylation at C22 followed with the hydroxylation at C20 to yield 20R,22R-hydroxycholesterol that is further cleaved between C20 and C22 to yield the C21-steroid pregnenolone and 4-methylpentanal. Mechanistically, uses molecular oxygen inserting one oxygen atom into a substrate and reducing the second into a water molecule. Two electrons are provided by NADPH via a two-protein mitochondrial transfer system comprising flavoprotein FDXR (adrenodoxin/ferredoxin reductase) and nonheme iron-sulfur protein FDX1 or FDX2 (adrenodoxin/ferredoxin). The polypeptide is Cholesterol side-chain cleavage enzyme, mitochondrial (Capra hircus (Goat)).